The primary structure comprises 149 residues: Deoxyuridine 5'-triphosphate nucleotidohydrolase (149 aa).

Residues Arg-68 to Gly-70, Asn-81, Leu-85 to Asp-87, and Met-95 contribute to the substrate site.

The protein belongs to the dUTPase family. Mg(2+) serves as cofactor.

The catalysed reaction is dUTP + H2O = dUMP + diphosphate + H(+). It functions in the pathway pyrimidine metabolism; dUMP biosynthesis; dUMP from dCTP (dUTP route): step 2/2. Functionally, this enzyme is involved in nucleotide metabolism: it produces dUMP, the immediate precursor of thymidine nucleotides and it decreases the intracellular concentration of dUTP so that uracil cannot be incorporated into DNA. The chain is Deoxyuridine 5'-triphosphate nucleotidohydrolase from Janthinobacterium sp. (strain Marseille) (Minibacterium massiliensis).